Here is a 364-residue protein sequence, read N- to C-terminus: Trans-enoyl reductase traG (364 aa).

51–54 provides a ligand contact to NADP(+); that stretch reads VDAK. Residue 136-143 participates in substrate binding; the sequence is LGLFTAGL. NADP(+) is bound by residues 176–179, 199–202, Y217, and 264–265; these read STAT, SKAN, and LE. 286–290 contributes to the substrate binding site; sequence ALTVF. 355–356 provides a ligand contact to NADP(+); it reads MS.

The protein belongs to the zinc-containing alcohol dehydrogenase family. Monomer.

It functions in the pathway secondary metabolite biosynthesis. In terms of biological role, trans-enoyl reductase; part of the tra gene cluster that produces terrestric acid. The clavatol biosynthesis cluster cla and the terrestric acid cluster tra are both involved in the production of peniphenones and penilactones. The non-reducing PKS claF is responsible for the formation of clavatol from successive condensations of 3 malonyl-CoA units, presumably with a simple acetyl-CoA starter unit, and 2 methylation steps. The esterase claE probably collaborates with claF by catalyzing the hydrolysis of ACP-bound acyl intermediates to free the ACP from stalled intermediates. The clavatol oxidase claD then converts clavatol to hydroxyclavatol. Spontaneous dehydration of hydroxyclavatol leads to the accumulation of the highly active ortho-quinone methide. On the other hand, the PKS-NRPS hybrid traA is involved in the formation of crustosic acid, with the help of traB and traD. The polyketide synthase module (PKS) of traA is responsible for the synthesis of the polyketide backbone via the condensation of an acetyl-CoA starter unit with 3 malonyl-CoA units. The downstream nonribosomal peptide synthetase (NRPS) module then amidates the carboxyl end of the polyketide with L-malic acid. Because traA lacks a designated enoylreductase (ER) domain, the required activity is provided the enoyl reductase traG. Crustosic acid undergoes decarboxylation and isomerization to the terrestric acid, catalyzed by the 2-oxoglutarate-dependent dioxygenase traH. Both acids are further converted to the 2 gamma-butyrolactones (R)-5-methyltetronic acid and (S)-5-carboxylmethyltetronic acid, with involvement of the cytochrome P450 monooxygenase claJ. Spontaneous addition of the methide to these gamma-butyrolactones leads to peniphenone D and penilactone D, which undergo again stereospecific attacking by methide to give penilactones A and B. This Penicillium crustosum (Blue mold fungus) protein is Trans-enoyl reductase traG.